Reading from the N-terminus, the 317-residue chain is Glutathione synthetase (317 aa).

Positions 126–311 (KFFATQFTQC…IGDKLMDAIA (186 aa)) constitute an ATP-grasp domain. 152–208 (AAEHRDIILKPLDGMGGSSIFRHREGDPNLSVILETLTQHGSQQIMAQRYLPEIKDG) contacts ATP. The Mg(2+) site is built by Glu282 and Asn284.

This sequence belongs to the prokaryotic GSH synthase family. The cofactor is Mg(2+). It depends on Mn(2+) as a cofactor.

It catalyses the reaction gamma-L-glutamyl-L-cysteine + glycine + ATP = glutathione + ADP + phosphate + H(+). The protein operates within sulfur metabolism; glutathione biosynthesis; glutathione from L-cysteine and L-glutamate: step 2/2. This Pseudomonas aeruginosa (strain ATCC 15692 / DSM 22644 / CIP 104116 / JCM 14847 / LMG 12228 / 1C / PRS 101 / PAO1) protein is Glutathione synthetase.